The following is a 630-amino-acid chain: Arginine--tRNA ligase (630 aa).

Residues 120 to 130 (ANPIHPLHIGH) carry the 'HIGH' region motif.

Belongs to the class-I aminoacyl-tRNA synthetase family.

The protein resides in the cytoplasm. It catalyses the reaction tRNA(Arg) + L-arginine + ATP = L-arginyl-tRNA(Arg) + AMP + diphosphate. The polypeptide is Arginine--tRNA ligase (Pyrobaculum arsenaticum (strain DSM 13514 / JCM 11321 / PZ6)).